A 146-amino-acid polypeptide reads, in one-letter code: Protein MucA (146 aa).

Active-site for autocatalytic cleavage activity residues include Ser-62 and Lys-99.

It belongs to the peptidase S24 family.

In terms of biological role, involved in UV protection and mutation. The chain is Protein MucA (mucA) from Escherichia coli.